A 389-amino-acid polypeptide reads, in one-letter code: Basigin (389 aa).

The signal sequence occupies residues 1–21 (MAAALLLALAFTLLSGQGACA). Over 22–325 (AAGFLKAPLS…ETISLRVRSR (304 aa)) the chain is Extracellular. One can recognise an Ig-like domain in the interval 37–120 (GGSVVLHCEA…SSDPDRNHLT (84 aa)). 3 disulfide bridges follow: C44–C108, C157–C203, and C242–C305. One can recognise an Ig-like C2-type domain in the interval 138–219 (EPGTIQTSVQ…VGRSEINVEG (82 aa)). N160, N270, and N306 each carry an N-linked (GlcNAc...) asparagine glycan. One can recognise an Ig-like V-type domain in the interval 221-319 (PRIKVGKKSE…AQGTTRETIS (99 aa)). Residues 326–349 (MAALWPFLGIVAEVLVLVTIIFIY) form a helical membrane-spanning segment. The Cytoplasmic segment spans residues 350 to 389 (EKRRKPDQTLDEDDPGAAPLKGSGTHMNDKDKNVRQRNAT). The segment at 356–389 (DQTLDEDDPGAAPLKGSGTHMNDKDKNVRQRNAT) is disordered. T358 bears the Phosphothreonine mark. S372 bears the Phosphoserine mark.

In terms of assembly, interacts with NXNL1. Interacts with SLC2A1 and SLC16A1/GLUT1. Interacts with XKR8; promoting its localization at the cell membrane. As to quaternary structure, interacts with ATP1B2, MAG and L1CAM. Interacts with SLC16A7. Interacts with VEGFA, KDR/VEGFR2, PPIA/CYPA, SLC1A3, SLC16A11 and SLC16A12. Interacts with PPIL2; regulates BSG transport to the cell membrane. Interacts with SLC16A1; interaction mediates SLC16A1 targeting to the plasma membrane. Interacts with SLC16A3; interaction mediates SLC16A3 targeting to the plasma membrane. Interacts with SLC16A6; this interaction mediates targeting to the plasma membrane. Post-translationally, N-glycosylated. N-glycosylated. During spermatogenesis, probably deglycosylated during epididymal transit. In terms of tissue distribution, retina-specific. Expressed in both rods and cones (at protein level). As to expression, testis and caput, corpus and cauda epididymides (at protein level). Expressed in the brain, lung, liver, kidney, heart, spleen, uterus, retina and skeletal muscle.

The protein localises to the cell membrane. It is found in the photoreceptor inner segment. Its subcellular location is the cell projection. The protein resides in the cilium. It localises to the photoreceptor outer segment. The protein localises to the endoplasmic reticulum membrane. It is found in the basolateral cell membrane. In terms of biological role, essential for normal retinal maturation and development. Acts as a retinal cell surface receptor for NXNL1 and plays an important role in NXNL1-mediated survival of retinal cone photoreceptors. In association with glucose transporter SLC16A1/GLUT1 and NXNL1, promotes retinal cone survival by enhancing aerobic glycolysis and accelerating the entry of glucose into photoreceptors. Signaling receptor for cyclophilins, essential for PPIA/CYPA and PPIB/CYPB-dependent signaling related to chemotaxis and adhesion of immune cells. Plays an important role in targeting the monocarboxylate transporters SLC16A1, SLC16A3 and SLC16A8 to the plasma membrane. Acts as a coreceptor for vascular endothelial growth factor receptor 2 (KDR/VEGFR2) in endothelial cells enhancing its VEGFA-mediated activation and downstream signaling. Promotes angiogenesis through EPAS1/HIF2A-mediated up-regulation of VEGFA and KDR/VEGFR2 in endothelial cells. Plays an important role in spermatogenesis; mediates interactions between germ cells and Sertoli cell and is essential for the development/differentiation of germ cells to round spermatids. The polypeptide is Basigin (Bsg) (Mus musculus (Mouse)).